A 1279-amino-acid chain; its full sequence is MGCTPSHNVIVNSVAKSGIQFFKKPKAILPGCQWGSPKCPIPLLVQSSTFCDSGGELHLGERLVEETVSSSKKLQAMAEGVRQLPKAMEGLIPESQTFQVNKPQGHRATDISFRTEGSHGTQEVDFSGKESKENTPQETSKGNRESVCHQPDSQDHCRQSATESKGRVDFPEPLVKAHQHAYAYLHTSLSRYEAIVRLVQQASQTWGLLRPMLNFLLLCFEEAGQLLSEISKDGDVLLQEVRGDLAWPLRKGEPWEQHPDLLQQLLQYTVSKLRALHGTVAALTGSFLEGSSSCLRSTAGHLEGKLSTKRGIDECLLRALGQLESLTSSHGDAGLLGPPLCSEDSGIGADNESVHSVEKLGKQASWDFAAELGEWKPGTAAQVEARPSGHAWQEGPYWTGSDRPQDCPLSSPRIAKVQPAVQDEARSASTSGAGAEAVTSGPSEAAESLPWDSLGAEIPVRTPLSRSSGLTDAPSLSEEEDCSPEEEDELSSTDLHPEPQKALPSRPRSSPDTRESLFQPYSKELRNPQAQEMILKMKEAISERIKFVPEPSRPQDWTEEEEGGTVVPPRPRSVSGSRGGPERQRRSQSEGCLKSHVEDPTLQELRRVQTDLSRRLEVFYALGATRQGQSRERCLPSRASVLWPPTNCRVSPSSAISKFKASLTQNFSILPNQDKSIFQKGSPCFDGEQPCQGKAEKLPNAIFCGKKSGRAPRDNERDIRACPTRPSVKTLIETFSPTESLRMPRNCRNLGSSPCLRKWGVPAMPPRFPIYRGLAPLYSKPQISPAAGWRPSAPFPSLPLAEVSESEDISGDVEEDLENLPPPPLEVLMDKSFAALECPECSQPAGSSLEETLLPGLQEASHPKRTWVSPRLKASMSPMDLLPSKGSGSSPRLHSTRSGSTRIVGDSRKLTLDLNSKQTASPSSEAKSRAQIQARAETIAGFSKQHQKAIPWHHTNPTPGQSRTLEPSLARFSRDPHSSEASRKGPERSLPRVRKASPQRAQWASQGDRRLQSLPSSHGPSQPGLPAVLSSPSPPLSPRTLSPPATRKTTSPPCQHPQSNPAPGSPPVRRTETNTPSSASCSSPSVSPSRGSKDSIHSEDSEATTAKASRNTCSIFYPAATSLFEAKSSSSTSHPQMLPEPGGLLRTPTGGWRGSSGQRLRADSQKRTVLNALNPLPFVRRTASDRQRQQGDQLQQSRSDWEFHSCQNSSSSSSSEENPKQELPPWNNSRVPELQGSSTKRASPLELCVLGHGLQPEARMNRGQDRPQPESQPQHKEIS.

Gly2 carries N-myristoyl glycine lipidation. The S-palmitoyl cysteine moiety is linked to residue Cys3. Disordered stretches follow at residues Asn101–Val168, Ala380–Glu598, Glu802–Pro821, Ala860–Lys1107, and Lys1127–Ser1279. Basic and acidic residues predominate over residues Phe126 to Val168. The span at Ser477–Ser491 shows a compositional bias: acidic residues. Composition is skewed to basic and acidic residues over residues Leu535–Phe547 and Gly580–Glu598. Over residues Ser804–Glu818 the composition is skewed to acidic residues. Polar residues-rich tracts occupy residues Gly886 to Thr901, Asp913 to Glu925, and Thr955 to Leu965. The span at Phe972–Leu990 shows a compositional bias: basic and acidic residues. The span at Arg1047–Ala1062 shows a compositional bias: polar residues. The span at Pro1076–Arg1090 shows a compositional bias: low complexity. Over residues Gly1091–Asp1100 the composition is skewed to basic and acidic residues. Polar residues predominate over residues Trp1226 to Arg1241. Over residues Arg1259 to Ser1279 the composition is skewed to basic and acidic residues.

As to expression, specifically expressed in retina.

The protein resides in the cell projection. The protein localises to the cilium. It is found in the photoreceptor outer segment. It localises to the photoreceptor inner segment. In terms of biological role, plays an essential role for normal photoreceptor cell maintenance and vision. This Mus musculus (Mouse) protein is Photoreceptor cilium actin regulator.